We begin with the raw amino-acid sequence, 155 residues long: MSRLHHQQGGQPSQRMLRVAELVRHAMSELLTRSDINDPALEGKVITVPDVRMSPDLKLATVYVMPLGGENVTEVLAALDRHKKLLRGEIARRVSLRFAPDVRFKADPGFEYSGKIDALLSSPKVKQDLEVQDLELKDSGCAGAPAKTGPAGDGE.

Belongs to the RbfA family. Monomer. Binds 30S ribosomal subunits, but not 50S ribosomal subunits or 70S ribosomes.

It localises to the cytoplasm. In terms of biological role, one of several proteins that assist in the late maturation steps of the functional core of the 30S ribosomal subunit. Associates with free 30S ribosomal subunits (but not with 30S subunits that are part of 70S ribosomes or polysomes). Required for efficient processing of 16S rRNA. May interact with the 5'-terminal helix region of 16S rRNA. This chain is Ribosome-binding factor A, found in Methylocella silvestris (strain DSM 15510 / CIP 108128 / LMG 27833 / NCIMB 13906 / BL2).